The primary structure comprises 400 residues: Elongation factor Tu (400 aa).

One can recognise a tr-type G domain in the interval 10 to 208 (KPHLNVGTIG…TMDSYFPEPQ (199 aa)). The G1 stretch occupies residues 19–26 (GHIDHGKT). 19–26 (GHIDHGKT) provides a ligand contact to GTP. Thr26 is a Mg(2+) binding site. Residues 60-64 (GITIN) are G2. Residues 81–84 (DCPG) form a G3 region. GTP-binding positions include 81-85 (DCPGH) and 136-139 (NKTD). The G4 stretch occupies residues 136 to 139 (NKTD). The interval 174–176 (SAL) is G5.

Belongs to the TRAFAC class translation factor GTPase superfamily. Classic translation factor GTPase family. EF-Tu/EF-1A subfamily. In terms of assembly, monomer.

Its subcellular location is the cytoplasm. It catalyses the reaction GTP + H2O = GDP + phosphate + H(+). GTP hydrolase that promotes the GTP-dependent binding of aminoacyl-tRNA to the A-site of ribosomes during protein biosynthesis. This is Elongation factor Tu from Thermosipho africanus (strain TCF52B).